The sequence spans 285 residues: Acetylglutamate kinase (285 aa).

Substrate contacts are provided by residues 64–65 (GG), R86, and N179.

This sequence belongs to the acetylglutamate kinase family. ArgB subfamily.

The protein localises to the plastid. Its subcellular location is the chloroplast. The catalysed reaction is N-acetyl-L-glutamate + ATP = N-acetyl-L-glutamyl 5-phosphate + ADP. It participates in amino-acid biosynthesis; L-arginine biosynthesis; N(2)-acetyl-L-ornithine from L-glutamate: step 2/4. Catalyzes the ATP-dependent phosphorylation of N-acetyl-L-glutamate. The polypeptide is Acetylglutamate kinase (Pyropia yezoensis (Susabi-nori)).